The following is a 568-amino-acid chain: MAGUK p55 subfamily member 3 (568 aa).

L27 domains follow at residues 6–60 (EDSG…ERQS) and 61–118 (PTPV…FDPV). Residues 137–218 (IVRLVKNKEP…SITLKIIPAT (82 aa)) form the PDZ domain. The SH3 domain occupies 226–296 (DSKVFMRALF…PSKQFQERRL (71 aa)). A Phosphoserine modification is found at serine 307. The Guanylate kinase-like domain occupies 385–568 (PRLVVLIGSL…QEPAASSELS (184 aa)).

The protein belongs to the MAGUK family. Interacts with HTR2C; this interaction stabilizes the receptor at the plasma membrane and prevents the desensitization of the HTR2C receptor-mediated calcium response. Interacts with HTR2A. Interacts with HTR4. Interacts (via PDZ domain) with CADM1 (via C-terminus)Interacts (via PDZ domain) with CADM1; this interaction connects CADM1 with DLG1. Interacts (via Guanylate kinase-like domain) with PALS1. Interacts with DLG1 (via N-terminus); this interaction connects CADM1 with DLG1 and links CADM1 with the regulatory subunit of phosphoinositide-3-kinase (PI3K) by forming a multiprotein complex and participates in cell spreading. As to expression, expressed in brain, skeletal muscle, testis, kidney, and lung.

Its subcellular location is the apical cell membrane. It localises to the cell membrane. The protein localises to the cell junction. It is found in the adherens junction. Functionally, participates in cell spreading through the phosphoinositide-3-kinase (PI3K) pathway by connecting CADM1 to DLG1 and the regulatory subunit of phosphoinositide-3-kinase (PI3K). Stabilizes HTR2C at the plasma membrane and prevents its desensitization. May participates in the maintenance of adherens junctions. The sequence is that of MAGUK p55 subfamily member 3 from Mus musculus (Mouse).